Here is a 141-residue protein sequence, read N- to C-terminus: Hemoglobin subunit alpha-D (141 aa).

Residues 1-141 enclose the Globin domain; it reads MLTADDKKLI…VAAVLAEKYR (141 aa). His-58 and His-87 together coordinate heme b.

This sequence belongs to the globin family. Heterotetramer of two alpha-D chains and two beta chains. In terms of tissue distribution, red blood cells.

Involved in oxygen transport from the lung to the various peripheral tissues. In Aegypius monachus (Cinereous vulture), this protein is Hemoglobin subunit alpha-D (HBAD).